A 147-amino-acid chain; its full sequence is Angiogenin (147 aa).

A signal peptide spans 1-24 (MVILLGPLLLVFMLGLGLAPLSLA). Residue H37 is the Proton acceptor of the active site. TRNA contacts are provided by R45 and D46. Cystine bridges form between C50/C104, C63/C115, and C81/C130. The Nucleolar localization signal motif lies at 55-59 (KQRGL). TRNA-binding residues include C104 and I126. H137 (proton donor) is an active-site residue.

This sequence belongs to the pancreatic ribonuclease family. As to quaternary structure, homodimer. Interacts with RNH1; inhibiting ANG ribonuclease activity. Interacts with PCNA.

It localises to the secreted. Its subcellular location is the nucleus. It is found in the nucleolus. The protein resides in the cytoplasm. The protein localises to the stress granule. Has weak tRNA ribonuclease activity by itself due to partial autoinhibition by its C-terminus, which folds into a short alpha-helix that partially occludes the substrate-binding site. In absence of stress, the ribonuclease activity is inhibited by RNH1 in the cytoplasm. In response to stress, dissociates from RNH1 in the cytoplasm and associates with cytoplasmic ribosomes with vacant A-sites: ribosomes directly activate the tRNA ribonuclease activity of ANG by refolding the C-terminal alpha-helix. In response to stress, the angiogenic activity of ANG is inhibited by RNH1 in the nucleus. In terms of biological role, secreted ribonuclease that can either promote or restrict cell proliferation of target cells, depending on the context. Endocytosed in target cells via its receptor PLXNB2 and translocates to the cytoplasm or nucleus. Under stress conditions, localizes to the cytoplasm and promotes the assembly of stress granules (SGs): specifically cleaves a subset of tRNAs within anticodon loops to produce tRNA-derived stress-induced fragments (tiRNAs), resulting in translation repression and inhibition of cell proliferation. tiRNas also prevent formation of apoptosome, thereby promoting cell survival. Preferentially cleaves RNAs between a pyrimidine and an adenosine residue, suggesting that it cleaves the anticodon loop of tRNA(Ala) (32-UUAGCAU-38) after positions 33 and 36. Cleaves a subset of tRNAs, including tRNA(Ala), tRNA(Glu), tRNA(Gly), tRNA(Lys), tRNA(Val), tRNA(His), tRNA(Asp) and tRNA(Sec). Under growth conditions and in differentiated cells, translocates to the nucleus and stimulates ribosomal RNA (rRNA) transcription, including that containing the initiation site sequences of 45S rRNA, thereby promoting cell growth and proliferation. Angiogenin induces vascularization of normal and malignant tissues via its ability to promote rRNA transcription. Involved in hematopoietic stem and progenitor cell (HSPC) growth and survival by promoting rRNA transcription in growth conditions and inhibiting translation in response to stress, respectively. Mediates the crosstalk between myeloid and intestinal epithelial cells to protect the intestinal epithelial barrier integrity: secreted by myeloid cells and promotes intestinal epithelial cells proliferation and survival. Also mediates osteoclast-endothelial cell crosstalk in growing bone: produced by osteoclasts and protects the neighboring vascular cells against senescence by promoting rRNA transcription. The protein is Angiogenin (ANG) of Sus scrofa (Pig).